Reading from the N-terminus, the 157-residue chain is Phosphopantetheine adenylyltransferase (157 aa).

Thr10 serves as a coordination point for substrate. Residues Thr10–Phe11 and His18 each bind ATP. The substrate site is built by Lys42, Leu74, and Arg88. ATP contacts are provided by residues Gly89–Arg91, Glu99, and Asn124–Ser130.

It belongs to the bacterial CoaD family. As to quaternary structure, homohexamer. Requires Mg(2+) as cofactor.

It is found in the cytoplasm. The enzyme catalyses (R)-4'-phosphopantetheine + ATP + H(+) = 3'-dephospho-CoA + diphosphate. It participates in cofactor biosynthesis; coenzyme A biosynthesis; CoA from (R)-pantothenate: step 4/5. Tightly binds to CoA, which is presumably a feedback inhibitor. Potently inhibited by D-amethopterin, which simultaneously occupies the 4'-phosphopantetheine- and ATP-binding sites; following treatment with D-amethopterin, H.pylori exhibits morphological characteristics associated with cell death, showing that D-amethopterin displays antimicrobial activity. In terms of biological role, reversibly transfers an adenylyl group from ATP to 4'-phosphopantetheine, yielding dephospho-CoA (dPCoA) and pyrophosphate. The chain is Phosphopantetheine adenylyltransferase from Helicobacter pylori (strain ATCC 700392 / 26695) (Campylobacter pylori).